Here is a 263-residue protein sequence, read N- to C-terminus: 3-methyl-2-oxobutanoate hydroxymethyltransferase (263 aa).

Mg(2+)-binding residues include D45 and D84. 3-methyl-2-oxobutanoate is bound by residues 45 to 46 (DS), D84, and K112. Residue E114 participates in Mg(2+) binding. Residue E181 is the Proton acceptor of the active site.

This sequence belongs to the PanB family. In terms of assembly, homodecamer; pentamer of dimers. Mg(2+) serves as cofactor.

The protein localises to the cytoplasm. It catalyses the reaction 3-methyl-2-oxobutanoate + (6R)-5,10-methylene-5,6,7,8-tetrahydrofolate + H2O = 2-dehydropantoate + (6S)-5,6,7,8-tetrahydrofolate. Its pathway is cofactor biosynthesis; (R)-pantothenate biosynthesis; (R)-pantoate from 3-methyl-2-oxobutanoate: step 1/2. Catalyzes the reversible reaction in which hydroxymethyl group from 5,10-methylenetetrahydrofolate is transferred onto alpha-ketoisovalerate to form ketopantoate. The protein is 3-methyl-2-oxobutanoate hydroxymethyltransferase of Photorhabdus laumondii subsp. laumondii (strain DSM 15139 / CIP 105565 / TT01) (Photorhabdus luminescens subsp. laumondii).